We begin with the raw amino-acid sequence, 477 residues long: Oxidative stress-induced growth inhibitor 1 (477 aa).

Ser-12 is modified (phosphoserine).

The protein belongs to the OKL38 family. The cofactor is NADPH. As to expression, ubiquitous. Highest expression in the ovary, testis, kidney, skeletal muscle and liver.

The protein resides in the midbody. Functionally, monooxygenase catalytic activity. Involved in regulation of cytokinesis; promotes RHOA activity, probably acting locally at the midbody in late cytokinesis. Monooxygenase activity is involved in stabilizing transient structures between daughter cells, termed intercellular bridges, before abscission. Regulates differentiation and proliferation through the regulation of cell death. The protein is Oxidative stress-induced growth inhibitor 1 of Homo sapiens (Human).